The sequence spans 100 residues: Large ribosomal subunit protein uL23 (100 aa).

It belongs to the universal ribosomal protein uL23 family. As to quaternary structure, part of the 50S ribosomal subunit. Contacts protein L29, and trigger factor when it is bound to the ribosome.

Its function is as follows. One of the early assembly proteins it binds 23S rRNA. One of the proteins that surrounds the polypeptide exit tunnel on the outside of the ribosome. Forms the main docking site for trigger factor binding to the ribosome. The polypeptide is Large ribosomal subunit protein uL23 (Pectobacterium atrosepticum (strain SCRI 1043 / ATCC BAA-672) (Erwinia carotovora subsp. atroseptica)).